We begin with the raw amino-acid sequence, 215 residues long: Octanoyltransferase (215 aa).

The region spanning Pro31–Glu206 is the BPL/LPL catalytic domain. Substrate contacts are provided by residues Arg70–His77, Ser137–Gly139, and Gly150–Ala152. Cys168 (acyl-thioester intermediate) is an active-site residue.

The protein belongs to the LipB family.

It is found in the cytoplasm. The enzyme catalyses octanoyl-[ACP] + L-lysyl-[protein] = N(6)-octanoyl-L-lysyl-[protein] + holo-[ACP] + H(+). It participates in protein modification; protein lipoylation via endogenous pathway; protein N(6)-(lipoyl)lysine from octanoyl-[acyl-carrier-protein]: step 1/2. In terms of biological role, catalyzes the transfer of endogenously produced octanoic acid from octanoyl-acyl-carrier-protein onto the lipoyl domains of lipoate-dependent enzymes. Lipoyl-ACP can also act as a substrate although octanoyl-ACP is likely to be the physiological substrate. This chain is Octanoyltransferase, found in Pseudomonas putida (strain GB-1).